The sequence spans 201 residues: Large ribosomal subunit protein eL15A (201 aa).

The interval 161-182 (SRGLTSIGKKSRGIGKGHRFNN) is disordered. Positions 169 to 179 (KKSRGIGKGHR) are enriched in basic residues.

This sequence belongs to the eukaryotic ribosomal protein eL15 family. Component of the large ribosomal subunit (LSU). Mature yeast ribosomes consist of a small (40S) and a large (60S) subunit. The 40S small subunit contains 1 molecule of ribosomal RNA (18S rRNA) and at least 33 different proteins. The large 60S subunit contains 3 rRNA molecules (25S, 5.8S and 5S rRNA) and at least 46 different proteins.

The protein resides in the cytoplasm. Its subcellular location is the nucleus. It is found in the nucleolus. In terms of biological role, component of the ribosome, a large ribonucleoprotein complex responsible for the synthesis of proteins in the cell. The small ribosomal subunit (SSU) binds messenger RNAs (mRNAs) and translates the encoded message by selecting cognate aminoacyl-transfer RNA (tRNA) molecules. The large subunit (LSU) contains the ribosomal catalytic site termed the peptidyl transferase center (PTC), which catalyzes the formation of peptide bonds, thereby polymerizing the amino acids delivered by tRNAs into a polypeptide chain. The nascent polypeptides leave the ribosome through a tunnel in the LSU and interact with protein factors that function in enzymatic processing, targeting, and the membrane insertion of nascent chains at the exit of the ribosomal tunnel. The polypeptide is Large ribosomal subunit protein eL15A (rpl15) (Schizosaccharomyces pombe (strain 972 / ATCC 24843) (Fission yeast)).